The following is a 245-amino-acid chain: Ribosomal RNA small subunit methyltransferase G (245 aa).

S-adenosyl-L-methionine is bound by residues Gly-90, Leu-95, 140 to 141, and Arg-158; that span reads AE.

This sequence belongs to the methyltransferase superfamily. RNA methyltransferase RsmG family.

It localises to the cytoplasm. Its function is as follows. Specifically methylates the N7 position of guanine in position 518 of 16S rRNA. The chain is Ribosomal RNA small subunit methyltransferase G from Mycobacterium leprae (strain TN).